The following is a 460-amino-acid chain: Ribosomal protein uS12 methylthiotransferase RimO (460 aa).

Residues 16 to 130 (NKIHFISLGC…ILSAIESKEY (115 aa)) enclose the MTTase N-terminal domain. 6 residues coordinate [4Fe-4S] cluster: Cys25, Cys61, Cys93, Cys164, Cys168, and Cys171. One can recognise a Radical SAM core domain in the interval 150–382 (STPKHYAYLK…SQAQKQNVEK (233 aa)). The region spanning 385–455 (QKLVGQVVEA…GYDLIGRVVK (71 aa)) is the TRAM domain.

It belongs to the methylthiotransferase family. RimO subfamily. The cofactor is [4Fe-4S] cluster.

It localises to the cytoplasm. It catalyses the reaction L-aspartate(89)-[ribosomal protein uS12]-hydrogen + (sulfur carrier)-SH + AH2 + 2 S-adenosyl-L-methionine = 3-methylsulfanyl-L-aspartate(89)-[ribosomal protein uS12]-hydrogen + (sulfur carrier)-H + 5'-deoxyadenosine + L-methionine + A + S-adenosyl-L-homocysteine + 2 H(+). Catalyzes the methylthiolation of an aspartic acid residue of ribosomal protein uS12. This is Ribosomal protein uS12 methylthiotransferase RimO from Chlamydia felis (strain Fe/C-56) (Chlamydophila felis).